The primary structure comprises 360 residues: POU domain, class 5, transcription factor 1 (360 aa).

2 disordered regions span residues Met-1–Gly-52 and Gly-88–Pro-114. The 9aaTAD motif lies at His-4–Ser-12. Ser-111 carries the phosphoserine; by MAPK modification. A Glycyl lysine isopeptide (Lys-Gly) (interchain with G-Cter in SUMO) cross-link involves residue Lys-123. Positions Asp-138–Asp-212 constitute a POU-specific domain. The DNA site is built by Arg-157 and Gln-164. DNA-binding stretches follow at residues Ser-180–Arg-186 and Ser-193–Asn-196. A DNA-binding region (homeobox) is located at residues Arg-230–Ser-289. Thr-235 carries the phosphothreonine modification. Phosphoserine occurs at positions 236, 289, 290, and 355.

The protein belongs to the POU transcription factor family. Class-5 subfamily. Interacts with PKM. Interacts with WWP2. Interacts with UBE2I and ZSCAN10. Interacts with PCGF1. Interacts with ESRRB; recruits ESRRB near the POU5F1-SOX2 element in the NANOG proximal promoter; the interaction is DNA independent. Interacts with ZNF322. Interacts with MAPK8 and MAPK9; the interaction allows MAPK8 and MAPK9 to phosphorylate POU5F1 on Ser-355. Interacts (when phosphorylated on Ser-355) with FBXW8. Interacts with FBXW4. Interacts with SOX2 and SOX15; binds synergistically with either SOX2 or SOX15 to DNA. Interacts with DDX56. In terms of processing, sumoylation enhances the protein stability, DNA binding and transactivation activity. Sumoylation is required for enhanced YES1 expression. Post-translationally, ubiquitinated; undergoes 'Lys-63'-linked polyubiquitination by WWP2 leading to proteasomal degradation. ERK1/2-mediated phosphorylation at Ser-111 promotes nuclear exclusion and proteasomal degradation. Phosphorylation at Thr-235 and Ser-236 decrease DNA-binding and alters ability to activate transcription. Expressed in developing brain. Highest levels found in specific cell layers of the cortex, the olfactory bulb, the hippocampus and the cerebellum. Low levels of expression in adult tissues.

The protein resides in the cytoplasm. It localises to the nucleus. Functionally, transcription factor that binds to the octamer motif (5'-ATTTGCAT-3'). Forms a trimeric complex with SOX2 or SOX15 on DNA and controls the expression of a number of genes involved in embryonic development such as YES1, FGF4, UTF1 and ZFP206. Critical for early embryogenesis and for embryonic stem cell pluripotency. The chain is POU domain, class 5, transcription factor 1 (POU5F1) from Homo sapiens (Human).